Here is a 70-residue protein sequence, read N- to C-terminus: Peptide BmKn1 (70 aa).

Positions 1–23 (MKSQTFFLLFLVVLLLAISQSEA) are cleaved as a signal peptide. At F36 the chain carries Phenylalanine amide. A propeptide spanning residues 40–70 (SMRDMDTMKYLYDPSLSAADLKTLQKLMENY) is cleaved from the precursor.

This sequence belongs to the non-disulfide-bridged peptide (NDBP) superfamily. Short antimicrobial peptide (group 4) family. Expressed by the venom gland.

It is found in the secreted. Its subcellular location is the target cell membrane. In terms of biological role, antibacterial peptide. The sequence is that of Peptide BmKn1 from Olivierus martensii (Manchurian scorpion).